We begin with the raw amino-acid sequence, 432 residues long: Golgin subfamily A member 6-like protein 9 (432 aa).

Residues 1–11 (MWPQPRLPPHP) are compositionally biased toward pro residues. Disordered regions lie at residues 1–77 (MWPQ…YGEG) and 349–411 (KELE…AGGA). Over residues 51-62 (NGSSPDTFTSGG) the composition is skewed to polar residues. Positions 157–354 (SKMEQLQDET…EQQVKELEKS (198 aa)) form a coiled coil. A compositionally biased stretch (basic and acidic residues) spans 349–362 (KELEKSGGAEEPRG). Low complexity predominate over residues 366 to 381 (AAAARPVAGAPVPQGA).

This sequence belongs to the GOLGA6 family.

The sequence is that of Golgin subfamily A member 6-like protein 9 from Homo sapiens (Human).